The primary structure comprises 716 residues: MDANLRKTLDELPAEPGCYLMKDRRGAVVYVGKASSLRSRVRSYFDASRGDDRAFVALLDELLGDVEVIVTRSEKEAVLLENELIKRHRPRFNIRLRDDKDFIVLRLDERHAFPRLEVRRAREPRRAGARYFGPYSSASSIRETLRVVNRHFQLRTCTDHVFEHRKRPCILYQIKRCPAPCVYDVPEAEYRQSVEDAIEFLEGRETELVERLHGRMDEAADALRFEDAARLRDQLQAVERSLEKQRVLMADRADRDVVGLYREGPDLVVQVLAMRAGKLQDSRSYPFHEQEFPDEETLSSFLSLYYEQNAAPEEILVPVEPAEVDALADVLSERRGRRVRLLTPQRGAKADLLEVAARNAEQGFRSWHEKDERREQALAALTRALHLARPPRWMECYDISTFQGALAVGSGVSFRDGEPDKACYRRYKVKGVAGQDDFAMLYEVVSRRLRRALGEGAFPDLLVIDGGKGQLNAALAAAKDLGVPTKPSPGNEGAPFVELVGLAKSRLVDAPALGTTRVIGRRGRGGGASRAASGAAALADAAEAQEHGFVSELARSPERVFLPGRKDPVVLRQNSAELFLLARLRDEAHRFAITFHRKLRRERNFQSVLEEISGIGEGRKRALLRHFGALRRVKEATLDEISQVDGFGPKQARAVFEFFHPPRREGAEGAAVVGPPSAAAAPPIETAAVAEAVSEEDIDAALAAEDEDAEGPAPVE.

Residues 14–94 (AEPGCYLMKD…IKRHRPRFNI (81 aa)) enclose the GIY-YIG domain. Residues 206–241 (TELVERLHGRMDEAADALRFEDAARLRDQLQAVERS) enclose the UVR domain.

It belongs to the UvrC family. In terms of assembly, interacts with UvrB in an incision complex.

It is found in the cytoplasm. Its function is as follows. The UvrABC repair system catalyzes the recognition and processing of DNA lesions. UvrC both incises the 5' and 3' sides of the lesion. The N-terminal half is responsible for the 3' incision and the C-terminal half is responsible for the 5' incision. This Anaeromyxobacter sp. (strain Fw109-5) protein is UvrABC system protein C.